Here is a 173-residue protein sequence, read N- to C-terminus: Alpha-crystallin A chain (173 aa).

At Met1 the chain carries N-acetylmethionine. The required for complex formation with BFSP1 and BFSP2 stretch occupies residues 1–63 (MDVTIQHPWF…RTVLDSGISE (63 aa)). Gln6 is modified (deamidated glutamine; partial). Ser45 carries the phosphoserine modification. Gln50 carries the post-translational modification Deamidated glutamine; partial. In terms of domain architecture, sHSP spans 52–162 (LFRTVLDSGI…GPSERAIPVS (111 aa)). Lys70 and Lys99 each carry N6-acetyllysine. The Zn(2+) site is built by His100, Glu102, and His107. A disordered region spans residues 145-173 (KVASGLDAGPSERAIPVSREEKPSSAPSS). An O-linked (GlcNAc) serine glycan is attached at Ser162.

This sequence belongs to the small heat shock protein (HSP20) family. Heteromer composed of three CRYAA and one CRYAB subunits. Zinc coordination is achieved at least by His-100, Glu-102 and His-107. His-100 and Glu-102 come from the same molecule within the oligomer, while His-107 residue is provided by another molecule. Inter-subunit bridging via zinc ions enhances stability, which is crucial as there is no protein turn over in the lens. Can also form homodimers and homotetramers (dimers of dimers) which serve as the building blocks of homooligomers. Part of a complex required for lens intermediate filament formation composed of BFSP1, BFSP2 and CRYAA. Post-translationally, acetylation at Lys-70 may increase chaperone activity. Undergoes age-dependent proteolytical cleavage at the C-terminus.

The protein resides in the cytoplasm. It is found in the nucleus. Contributes to the transparency and refractive index of the lens. Acts as a chaperone, preventing aggregation of various proteins under a wide range of stress conditions. Required for the correct formation of lens intermediate filaments as part of a complex composed of BFSP1, BFSP2 and CRYAA. The chain is Alpha-crystallin A chain (CRYAA) from Erinaceus europaeus (Western European hedgehog).